The sequence spans 110 residues: Large ribosomal subunit protein uL22 (110 aa).

This sequence belongs to the universal ribosomal protein uL22 family. In terms of assembly, part of the 50S ribosomal subunit.

In terms of biological role, this protein binds specifically to 23S rRNA; its binding is stimulated by other ribosomal proteins, e.g. L4, L17, and L20. It is important during the early stages of 50S assembly. It makes multiple contacts with different domains of the 23S rRNA in the assembled 50S subunit and ribosome. Functionally, the globular domain of the protein is located near the polypeptide exit tunnel on the outside of the subunit, while an extended beta-hairpin is found that lines the wall of the exit tunnel in the center of the 70S ribosome. In Glaesserella parasuis serovar 5 (strain SH0165) (Haemophilus parasuis), this protein is Large ribosomal subunit protein uL22.